A 340-amino-acid polypeptide reads, in one-letter code: NAD-dependent epimerase/dehydratase terH (340 aa).

A helical transmembrane segment spans residues 7-27 (IVPPGGLVLVTGVTGFIGSYI). Asparagine 139 is a glycosylation site (N-linked (GlcNAc...) asparagine). NADP(+) is bound at residue tyrosine 176.

This sequence belongs to the NAD(P)-dependent epimerase/dehydratase family. Dihydroflavonol-4-reductase subfamily.

Its subcellular location is the membrane. Its function is as follows. NAD-dependent epimerase/dehydratase; part of the gene cluster that mediates the biosynthesis of terrein, a fungal metabolite with ecological, antimicrobial, antiproliferative, and antioxidative activities. The first step in the pathway is performed by the polyketide synthase terA that produces 4-hydroxy-6-methylpyranon (4-HMP), orsellinic acid (OA), and 2,3-dehydro-6-hydroxymellein (2,3-dehydro-6-HM) by condensing acetyl-CoA with two, three, or four malonyl-CoA units, respectively. 4-HMP and OA are not pathway intermediates, but are rather shunt or side products. 2,3-dehydro-6-HM is further converted to 6-hydroxymellein (6-HM) by the 6-hydroxymellein synthase terB. The monooxygenases terC and terD, the multicopper oxidase terE and the Kelch-like protein terF are then involved in the transformation of 6-HM to terrein. Even if they are co-regulated with the other terrein cluster genes, terH and terI seem to be dispensable for terrein production; whereas one or both of the 2 transporters terG and terJ are probably required for efficient secretion of metabolites. In Aspergillus terreus (strain NIH 2624 / FGSC A1156), this protein is NAD-dependent epimerase/dehydratase terH.